The chain runs to 187 residues: Large ribosomal subunit protein uL5 (187 aa).

It belongs to the universal ribosomal protein uL5 family. In terms of assembly, part of the 50S ribosomal subunit; part of the 5S rRNA/L5/L18/L25 subcomplex. Contacts the 5S rRNA and the P site tRNA. Forms a bridge to the 30S subunit in the 70S ribosome.

Functionally, this is one of the proteins that bind and probably mediate the attachment of the 5S RNA into the large ribosomal subunit, where it forms part of the central protuberance. In the 70S ribosome it contacts protein S13 of the 30S subunit (bridge B1b), connecting the 2 subunits; this bridge is implicated in subunit movement. Contacts the P site tRNA; the 5S rRNA and some of its associated proteins might help stabilize positioning of ribosome-bound tRNAs. This chain is Large ribosomal subunit protein uL5, found in Dinoroseobacter shibae (strain DSM 16493 / NCIMB 14021 / DFL 12).